The primary structure comprises 149 residues: MADQLSEEQISEFKEAFSLFDKDGDGTITTKELGTVMRSLGQNPTEAELQDMINEVDADGNGTIDFPEFLTMMARKMRDTDSEEEIKEAFKVFDKDGNGYISAAELRHVMTNLGEKLTDNEVDEMIREADVDGDGQINYEEFVKMMLSK.

A2 is subject to N-acetylalanine. 4 EF-hand domains span residues 8–43 (EQIS…LGQN), 44–79 (PTEA…KMRD), 81–116 (DSEE…LGEK), and 117–149 (LTDN…MLSK). Residues D21, D23, D25, T27, E32, D57, D59, N61, T63, E68, D94, D96, N98, Y100, E105, D130, D132, D134, Q136, and E141 each contribute to the Ca(2+) site.

This sequence belongs to the calmodulin family.

Calmodulin mediates the control of a large number of enzymes, ion channels and other proteins by Ca(2+). Among the enzymes to be stimulated by the calmodulin-Ca(2+) complex are a number of protein kinases and phosphatases. The protein is Calmodulin (CMD1) of Pleurotus ostreatus (Oyster mushroom).